We begin with the raw amino-acid sequence, 425 residues long: UPF0229 protein SG1344 (425 aa).

Residues 49 to 109 (GESVSIPNTD…GQGSVSQDGE (61 aa)) are disordered. Polar residues predominate over residues 50–59 (ESVSIPNTDI). Residues 77 to 90 (PGNDHFVQNDRIER) show a composition bias toward basic and acidic residues.

This sequence belongs to the UPF0229 family.

This Sodalis glossinidius (strain morsitans) protein is UPF0229 protein SG1344.